A 139-amino-acid chain; its full sequence is Nucleoside diphosphate kinase (139 aa).

Residues lysine 9, phenylalanine 57, arginine 85, threonine 91, arginine 102, and asparagine 112 each contribute to the ATP site. The active-site Pros-phosphohistidine intermediate is the histidine 115.

This sequence belongs to the NDK family. Homotetramer. Mg(2+) is required as a cofactor.

It is found in the cytoplasm. It catalyses the reaction a 2'-deoxyribonucleoside 5'-diphosphate + ATP = a 2'-deoxyribonucleoside 5'-triphosphate + ADP. The enzyme catalyses a ribonucleoside 5'-diphosphate + ATP = a ribonucleoside 5'-triphosphate + ADP. In terms of biological role, major role in the synthesis of nucleoside triphosphates other than ATP. The ATP gamma phosphate is transferred to the NDP beta phosphate via a ping-pong mechanism, using a phosphorylated active-site intermediate. The sequence is that of Nucleoside diphosphate kinase from Neorickettsia sennetsu (strain ATCC VR-367 / Miyayama) (Ehrlichia sennetsu).